The chain runs to 399 residues: Enoyl-[acyl-carrier-protein] reductase [NADH] 2 (399 aa).

NAD(+)-binding positions include 48–53, 75–76, 112–113, and 141–142; these read GASSGF, FE, DA, and LA. Tyr227 contributes to the substrate binding site. Tyr237 (proton donor) is an active-site residue. NAD(+) is bound by residues Lys246 and 275-277; that span reads LVT.

The protein belongs to the TER reductase family. Monomer.

The catalysed reaction is a 2,3-saturated acyl-[ACP] + NAD(+) = a (2E)-enoyl-[ACP] + NADH + H(+). The protein operates within lipid metabolism; fatty acid biosynthesis. Functionally, involved in the final reduction of the elongation cycle of fatty acid synthesis (FAS II). Catalyzes the reduction of a carbon-carbon double bond in an enoyl moiety that is covalently linked to an acyl carrier protein (ACP). The sequence is that of Enoyl-[acyl-carrier-protein] reductase [NADH] 2 from Vibrio parahaemolyticus serotype O3:K6 (strain RIMD 2210633).